Reading from the N-terminus, the 59-residue chain is Antitoxin RelB4 (59 aa).

The segment at 38–59 (VGEWLKTLGTPHQTPPPYSWRK) is disordered. Positions 50-59 (QTPPPYSWRK) are enriched in pro residues.

In terms of biological role, antitoxin component of a type II toxin-antitoxin (TA) system. Neutralizes the effect of cognate toxin RelE4, but no other RelE or ParE toxin. In Caulobacter vibrioides (strain ATCC 19089 / CIP 103742 / CB 15) (Caulobacter crescentus), this protein is Antitoxin RelB4 (relB4).